Reading from the N-terminus, the 222-residue chain is Probable fructose-6-phosphate aldolase (222 aa).

The Schiff-base intermediate with substrate role is filled by K87.

Belongs to the transaldolase family. Type 3A subfamily.

The protein localises to the cytoplasm. It catalyses the reaction beta-D-fructose 6-phosphate = dihydroxyacetone + D-glyceraldehyde 3-phosphate. Functionally, catalyzes the reversible formation of fructose 6-phosphate from dihydroxyacetone and D-glyceraldehyde 3-phosphate via an aldolization reaction. The sequence is that of Probable fructose-6-phosphate aldolase from Streptococcus pneumoniae (strain ATCC 700669 / Spain 23F-1).